A 264-amino-acid polypeptide reads, in one-letter code: Thymidylate synthase (264 aa).

Arg-21 contributes to the dUMP binding site. His-51 is a binding site for (6R)-5,10-methylene-5,6,7,8-tetrahydrofolate. 126 to 127 (RR) is a dUMP binding site. Residue Cys-146 is the Nucleophile of the active site. DUMP-binding positions include 166-169 (RSCD), Asn-177, and 207-209 (HLY). Asp-169 lines the (6R)-5,10-methylene-5,6,7,8-tetrahydrofolate pocket. Ala-263 lines the (6R)-5,10-methylene-5,6,7,8-tetrahydrofolate pocket.

The protein belongs to the thymidylate synthase family. Bacterial-type ThyA subfamily. As to quaternary structure, homodimer.

It localises to the cytoplasm. The enzyme catalyses dUMP + (6R)-5,10-methylene-5,6,7,8-tetrahydrofolate = 7,8-dihydrofolate + dTMP. It participates in pyrimidine metabolism; dTTP biosynthesis. Functionally, catalyzes the reductive methylation of 2'-deoxyuridine-5'-monophosphate (dUMP) to 2'-deoxythymidine-5'-monophosphate (dTMP) while utilizing 5,10-methylenetetrahydrofolate (mTHF) as the methyl donor and reductant in the reaction, yielding dihydrofolate (DHF) as a by-product. This enzymatic reaction provides an intracellular de novo source of dTMP, an essential precursor for DNA biosynthesis. In Baumannia cicadellinicola subsp. Homalodisca coagulata, this protein is Thymidylate synthase.